The following is a 187-amino-acid chain: Elongation factor P (187 aa).

It belongs to the elongation factor P family.

The protein localises to the cytoplasm. Its pathway is protein biosynthesis; polypeptide chain elongation. Its function is as follows. Involved in peptide bond synthesis. Stimulates efficient translation and peptide-bond synthesis on native or reconstituted 70S ribosomes in vitro. Probably functions indirectly by altering the affinity of the ribosome for aminoacyl-tRNA, thus increasing their reactivity as acceptors for peptidyl transferase. The protein is Elongation factor P of Corynebacterium diphtheriae (strain ATCC 700971 / NCTC 13129 / Biotype gravis).